The sequence spans 153 residues: NAD(P)H-quinone oxidoreductase subunit N (153 aa).

This sequence belongs to the complex I NdhN subunit family. In terms of assembly, NDH-1 can be composed of about 15 different subunits; different subcomplexes with different compositions have been identified which probably have different functions.

It is found in the cellular thylakoid membrane. It catalyses the reaction a plastoquinone + NADH + (n+1) H(+)(in) = a plastoquinol + NAD(+) + n H(+)(out). It carries out the reaction a plastoquinone + NADPH + (n+1) H(+)(in) = a plastoquinol + NADP(+) + n H(+)(out). Functionally, NDH-1 shuttles electrons from an unknown electron donor, via FMN and iron-sulfur (Fe-S) centers, to quinones in the respiratory and/or the photosynthetic chain. The immediate electron acceptor for the enzyme in this species is believed to be plastoquinone. Couples the redox reaction to proton translocation, and thus conserves the redox energy in a proton gradient. Cyanobacterial NDH-1 also plays a role in inorganic carbon-concentration. The polypeptide is NAD(P)H-quinone oxidoreductase subunit N (Synechococcus sp. (strain CC9311)).